A 110-amino-acid chain; its full sequence is Insulin (110 aa).

The signal sequence occupies residues Met1–Ala24. Disulfide bonds link Cys31-Cys96, Cys43-Cys109, and Cys95-Cys100. Positions Gly57–Gln87 are cleaved as a propeptide — c peptide.

Belongs to the insulin family. Heterodimer of a B chain and an A chain linked by two disulfide bonds.

It localises to the secreted. In terms of biological role, insulin decreases blood glucose concentration. It increases cell permeability to monosaccharides, amino acids and fatty acids. It accelerates glycolysis, the pentose phosphate cycle, and glycogen synthesis in liver. This chain is Insulin (INS), found in Psammomys obesus (Fat sand rat).